The following is a 365-amino-acid chain: S-adenosylmethionine decarboxylase proenzyme (365 aa).

Catalysis depends on residues Glu-31 and Glu-34. Ser-87 functions as the Schiff-base intermediate with substrate; via pyruvic acid in the catalytic mechanism. Pyruvic acid (Ser); by autocatalysis is present on Ser-87. Catalysis depends on Cys-101, which acts as the Proton donor; for catalytic activity. Residues Ser-248 and His-263 each act as proton acceptor; for processing activity in the active site.

Belongs to the eukaryotic AdoMetDC family. As to quaternary structure, heterotetramer of two alpha and two beta chains. Pyruvate is required as a cofactor. In terms of processing, is synthesized initially as an inactive proenzyme. Formation of the active enzyme involves a self-maturation process in which the active site pyruvoyl group is generated from an internal serine residue via an autocatalytic post-translational modification. Two non-identical subunits are generated from the proenzyme in this reaction, and the pyruvate is formed at the N-terminus of the alpha chain, which is derived from the carboxyl end of the proenzyme. The post-translation cleavage follows an unusual pathway, termed non-hydrolytic serinolysis, in which the side chain hydroxyl group of the serine supplies its oxygen atom to form the C-terminus of the beta chain, while the remainder of the serine residue undergoes an oxidative deamination to produce ammonia and the pyruvoyl group blocking the N-terminus of the alpha chain.

It catalyses the reaction S-adenosyl-L-methionine + H(+) = S-adenosyl 3-(methylsulfanyl)propylamine + CO2. The protein operates within amine and polyamine biosynthesis; S-adenosylmethioninamine biosynthesis; S-adenosylmethioninamine from S-adenosyl-L-methionine: step 1/1. The chain is S-adenosylmethionine decarboxylase proenzyme (smd-1) from Onchocerca volvulus.